The sequence spans 657 residues: Endoplasmic reticulum mannosyl-oligosaccharide 1,2-alpha-mannosidase (657 aa).

Residues 1–49 (MYPPPPAPAPHRDFISVTLSLGESYDNSKSRRRRSCWRKWKQLSRLQRN) lie on the Cytoplasmic side of the membrane. A helical transmembrane segment spans residues 50–70 (VILFVLGFLILCGFLYSLQVS). The Lumenal segment spans residues 71–657 (DQWKALSGSR…AHPLPIWSPA (587 aa)). The residue at position 101 (Ser-101) is a Phosphoserine. The segment at 118 to 157 (HLRRGPPHLQIRPPNTVSKDGMQDDAKEREAALGKAQQEE) is disordered. Residues 138–157 (GMQDDAKEREAALGKAQQEE) are compositionally biased toward basic and acidic residues. The active-site Proton donor is Glu-288. Residue Asp-421 is part of the active site. Cys-485 and Cys-514 are oxidised to a cystine. Catalysis depends on Glu-528, which acts as the Proton donor. Glu-557 is a catalytic residue. Thr-646 lines the Ca(2+) pocket.

It belongs to the glycosyl hydrolase 47 family. Ca(2+) is required as a cofactor.

It localises to the endoplasmic reticulum membrane. It catalyses the reaction N(4)-(alpha-D-Man-(1-&gt;2)-alpha-D-Man-(1-&gt;2)-alpha-D-Man-(1-&gt;3)-[alpha-D-Man-(1-&gt;2)-alpha-D-Man-(1-&gt;3)-[alpha-D-Man-(1-&gt;2)-alpha-D-Man-(1-&gt;6)]-alpha-D-Man-(1-&gt;6)]-beta-D-Man-(1-&gt;4)-beta-D-GlcNAc-(1-&gt;4)-beta-D-GlcNAc)-L-asparaginyl-[protein] (N-glucan mannose isomer 9A1,2,3B1,2,3) + 4 H2O = N(4)-(alpha-D-Man-(1-&gt;3)-[alpha-D-Man-(1-&gt;3)-[alpha-D-Man-(1-&gt;6)]-alpha-D-Man-(1-&gt;6)]-beta-D-Man-(1-&gt;4)-beta-D-GlcNAc-(1-&gt;4)-beta-D-GlcNAc)-L-asparaginyl-[protein] (N-glucan mannose isomer 5A1,2) + 4 beta-D-mannose. It carries out the reaction N(4)-(alpha-D-Man-(1-&gt;2)-alpha-D-Man-(1-&gt;2)-alpha-D-Man-(1-&gt;3)-[alpha-D-Man-(1-&gt;3)-[alpha-D-Man-(1-&gt;2)-alpha-D-Man-(1-&gt;6)]-alpha-D-Man-(1-&gt;6)]-beta-D-Man-(1-&gt;4)-beta-D-GlcNAc-(1-&gt;4)-beta-D-GlcNAc)-L-asparaginyl-[protein] (N-glucan mannose isomer 8A1,2,3B1,3) + 3 H2O = N(4)-(alpha-D-Man-(1-&gt;3)-[alpha-D-Man-(1-&gt;3)-[alpha-D-Man-(1-&gt;6)]-alpha-D-Man-(1-&gt;6)]-beta-D-Man-(1-&gt;4)-beta-D-GlcNAc-(1-&gt;4)-beta-D-GlcNAc)-L-asparaginyl-[protein] (N-glucan mannose isomer 5A1,2) + 3 beta-D-mannose. It functions in the pathway protein modification; protein glycosylation. Its function is as follows. Involved in glycoprotein quality control targeting of misfolded glycoproteins for degradation. It primarily trims a single alpha-1,2-linked mannose residue from Man(9)GlcNAc(2) to produce Man(8)GlcNAc(2), but at high enzyme concentrations, as found in the ER quality control compartment (ERQC), it further trims the carbohydrates to Man(5-6)GlcNAc(2). This is Endoplasmic reticulum mannosyl-oligosaccharide 1,2-alpha-mannosidase (Man1b1) from Rattus norvegicus (Rat).